A 127-amino-acid polypeptide reads, in one-letter code: Large ribosomal subunit protein bL21 (127 aa).

It belongs to the bacterial ribosomal protein bL21 family. Part of the 50S ribosomal subunit. Contacts protein L20.

This protein binds to 23S rRNA in the presence of protein L20. The chain is Large ribosomal subunit protein bL21 from Synechococcus sp. (strain ATCC 27144 / PCC 6301 / SAUG 1402/1) (Anacystis nidulans).